A 354-amino-acid polypeptide reads, in one-letter code: Trans-L-3-hydroxyproline dehydratase (354 aa).

C104 serves as the catalytic Proton acceptor. Residues G105–H106, D269, and G274–S275 contribute to the substrate site.

It belongs to the proline racemase family. As to quaternary structure, homodimer.

It catalyses the reaction trans-3-hydroxy-L-proline = 1-pyrroline-2-carboxylate + H2O. Functionally, catalyzes the dehydration of trans-3-hydroxy-L-proline to delta-1-pyrroline-2-carboxylate (Pyr2C). The chain is Trans-L-3-hydroxyproline dehydratase (L3HYPDH) from Pongo abelii (Sumatran orangutan).